The primary structure comprises 505 residues: Protein disulfide-isomerase A3 (505 aa).

Residues Met1 to Ala24 form the signal peptide. The Thioredoxin 1 domain occupies Ser25 to Gly133. Active-site nucleophile residues include Cys57 and Cys60. Cys57 and Cys60 are disulfide-bonded. Lys61 carries the post-translational modification N6-methyllysine. An intrachain disulfide couples Cys85 to Cys92. Lys129 is modified (N6-succinyllysine). At Lys152 the chain carries N6-acetyllysine. An N6-succinyllysine modification is found at Lys218. Lys252 is modified (N6-acetyllysine). Thr319 is modified (phosphothreonine). The Thioredoxin 2 domain maps to Ser343–Thr485. N6-acetyllysine is present on Lys362. Residues Cys406 and Cys409 each act as nucleophile in the active site. A disulfide bridge connects residues Cys406 and Cys409. The disordered stretch occupies residues Ala484–Leu505. Residues Gln491 to Leu505 show a composition bias toward basic and acidic residues. N6-acetyllysine is present on Lys494. Residues Gln502–Leu505 carry the Prevents secretion from ER motif.

As to quaternary structure, part of the major histocompatibility complex class I (MHC I) peptide loading complex composed of TAP1, TAP2, B2M, MHC heavy chain, TAPBP, PDIA3, and CALR. Interacts with ERP27 and CANX. Interacts with SERPINA2 and with the S and Z variants of SERPINA1. Interacts with ATP2A2. In terms of processing, within the major histocompatibility complex class I (MHC I) peptide loading complex forms reversible disulfide-linked heterodimers with TAPBP as part of its protein folding chaperone activity. This is essential to assist the dynamic assembly of the MHC I complex with high affinity antigens in the endoplasmic reticulum. Post-translationally, phosphorylated. Detected in the flagellum and head region of spermatozoa (at protein level). Expressed in liver, stomach and colon (at protein level). Expressed in gastric parietal cells and chief cells (at protein level).

The protein localises to the endoplasmic reticulum. It is found in the endoplasmic reticulum lumen. It localises to the melanosome. It catalyses the reaction Catalyzes the rearrangement of -S-S- bonds in proteins.. Its activity is regulated as follows. Association with calcitriol does not affect its enzymatic activity. Functionally, protein disulfide isomerase that catalyzes the formation, isomerization, and reduction or oxidation of disulfide bonds in client proteins and functions as a protein folding chaperone. Core component of the major histocompatibility complex class I (MHC I) peptide loading complex where it functions as an essential folding chaperone for TAPBP. Through TAPBP, assists the dynamic assembly of the MHC I complex with high affinity antigens in the endoplasmic reticulum. Therefore, plays a crucial role in the presentation of antigens to cytotoxic T cells in adaptive immunity. This chain is Protein disulfide-isomerase A3, found in Homo sapiens (Human).